The sequence spans 389 residues: Nicotinamide-nucleotide adenylyltransferase (389 aa).

A Nuclear localization signal motif is present at residues 380–383 (KKQK).

The protein belongs to the eukaryotic NMN adenylyltransferase family. Abundantly expressed in neuronal and muscle cells. Present at relatively low levels at the neuromuscular junction. Expressed in the eye; present in photoreceptor cells and various neurons in the lamina cortex and medulla cortex and at low levels in the lamina.

It localises to the nucleus. The protein resides in the cytoplasm. The protein localises to the presynaptic active zone. It carries out the reaction beta-nicotinamide D-ribonucleotide + ATP + H(+) = diphosphate + NAD(+). The catalysed reaction is nicotinate beta-D-ribonucleotide + ATP + H(+) = deamido-NAD(+) + diphosphate. The protein operates within cofactor biosynthesis; NAD(+) biosynthesis; NAD(+) from nicotinamide D-ribonucleotide: step 1/1. It functions in the pathway cofactor biosynthesis; NAD(+) biosynthesis; deamido-NAD(+) from nicotinate D-ribonucleotide: step 1/1. Functionally, catalyzes the formation of NAD(+) from nicotinamide mononucleotide (NMN) and ATP. Essential for viability. Stress-response chaperone protein that prevents toxic aggregation of proteins and promotes proteasome-mediated degradation of misfolded proteins; this is independent of its NAD(+) synthesis activity. Neuroprotective in response to toxic protein aggregation, for example by overexpressed Atx-1/ataxin-1. Required for maintenance and integrity of mature neurons, protecting them from neuronal activity-induced neurodegeneration. Required for the maintenance of axonal and dendritic integrity in both central and peripheral neurons. Chaperone function and neuroprotective roles are largely independent of NAD(+) synthesis activity. Its function is as follows. Catalyzes the formation of NAD(+) from nicotinamide mononucleotide (NMN) and ATP. Has, or stimulates, chaperone holdase activity but not refoldase activity. Does not have neuroprotective properties and may stimulate apoptosis and neurodegeneration in response to toxic protein aggregates. In terms of biological role, catalyzes the formation of NAD(+) from nicotinamide mononucleotide (NMN) and ATP. Has, or stimulates, chaperone holdase and refoldase activity. Neuroprotective and reduces the toxic load of protein aggregates, preventing apoptosis and neurodegeneration. Promotes clearance of nuclear misfolded protein aggregates. The sequence is that of Nicotinamide-nucleotide adenylyltransferase from Drosophila melanogaster (Fruit fly).